Reading from the N-terminus, the 204-residue chain is Somatotropin (204 aa).

The signal sequence occupies residues 1 to 17 (MNSVVLLLSVVCLGVSS). The residue at position 18 (Q18) is a Pyrrolidone carboxylic acid. H36 serves as a coordination point for Zn(2+). C69 and C177 form a disulfide bridge. E186 is a Zn(2+) binding site. Residues C194 and C202 are joined by a disulfide bond.

This sequence belongs to the somatotropin/prolactin family.

Its subcellular location is the secreted. Its function is as follows. Growth hormone plays an important role in growth control and involved in the regulation of several anabolic processes. The polypeptide is Somatotropin (gh) (Oreochromis niloticus (Nile tilapia)).